The sequence spans 684 residues: Kelch repeat and BTB domain-containing protein 7 (684 aa).

The tract at residues 1 to 27 (MQSREDVPRSRRLASPRGGRRPKRISK) is disordered. Basic residues predominate over residues 10–26 (SRRLASPRGGRRPKRIS). A Phosphoserine modification is found at S29. The BTB domain maps to 63–138 (CDVTIEVVTP…CYTGRVSLSE (76 aa)). Kelch repeat units follow at residues 386 to 435 (AVCV…YLNG), 436 to 484 (YIYI…VVQN), 486 to 523 (LYAVNSKRMLCYDPSHNMWLNCASLKRSDFQEACVFND), 524 to 564 (EIYC…IVNH), and 567 to 616 (KLLL…CLCA). The tract at residues 630–666 (ITEEDDARSESSTEWDLDGFSELDSESGSSSSFSDDE) is disordered. Residues 631-654 (TEEDDARSESSTEWDLDGFSELDS) are compositionally biased toward acidic residues. Residues 668–671 (WVQV) carry the ATG8 interaction motif (AIM) motif.

Core component of a BCR3 (BTB-CUL3-RBX1) E3 ubiquitin ligase complex, also named Cul3-RING ubiquitin ligase complex CUL3(KBTBD6/7), composed of CUL3, RBX1, KBTBD6 and KBTBD7. Interacts with GABARAP; the interaction is direct and is required for the ubiquitination of TIAM1. Interacts with GABARAPL1, GABARAPL2 and MAP1LC3B; the interaction is direct.

The protein resides in the cytoplasm. The protein localises to the nucleus. It functions in the pathway protein modification; protein ubiquitination. Its function is as follows. As part of the CUL3(KBTBD6/7) E3 ubiquitin ligase complex functions as a substrate adapter for the RAC1 guanine exchange factor (GEF) TIAM1, mediating its 'Lys-48' ubiquitination and proteasomal degradation. By controlling this ubiquitination, regulates RAC1 signal transduction and downstream biological processes including the organization of the cytoskeleton, cell migration and cell proliferation. Ubiquitination of TIAM1 requires the membrane-associated protein GABARAP which may restrict locally the activity of the complex. The protein is Kelch repeat and BTB domain-containing protein 7 of Homo sapiens (Human).